A 607-amino-acid polypeptide reads, in one-letter code: ENTH domain-containing protein 1 (607 aa).

An ENTH domain is found at Asn9–Arg141. Residues Glu543 to Asn574 are a coiled coil.

The polypeptide is ENTH domain-containing protein 1 (ENTHD1) (Homo sapiens (Human)).